The following is a 211-amino-acid chain: MTSAFNWSALAFILAAIGLVIFMLVVPRLLGGRSQGTEKEEVFESGVVGAGNARIRLSAKFYLVAIFFVIFDLEALYLYAYSVSVREVGWIGYATALIFVVDLLIGLIYALSLGALNWAPADKRRKKERLSAAPAGFNLASITKFNGIDELHTDPTGKVPAQSSGQVNVSNDIEANKRHLANIDRINVTGNVTSVDFSTQSTNSLSNKSSS.

3 helical membrane-spanning segments follow: residues 7–27, 61–81, and 88–108; these read WSAL…LVVP, FYLV…LYAY, and VGWI…IGLI.

The protein belongs to the complex I subunit 3 family. In terms of assembly, NDH-1 is composed of 14 different subunits. Subunits NuoA, H, J, K, L, M, N constitute the membrane sector of the complex.

The protein localises to the cell inner membrane. The catalysed reaction is a quinone + NADH + 5 H(+)(in) = a quinol + NAD(+) + 4 H(+)(out). In terms of biological role, NDH-1 shuttles electrons from NADH, via FMN and iron-sulfur (Fe-S) centers, to quinones in the respiratory chain. The immediate electron acceptor for the enzyme in this species is believed to be ubiquinone. Couples the redox reaction to proton translocation (for every two electrons transferred, four hydrogen ions are translocated across the cytoplasmic membrane), and thus conserves the redox energy in a proton gradient. The sequence is that of NADH-quinone oxidoreductase subunit A from Psychrobacter sp. (strain PRwf-1).